Reading from the N-terminus, the 137-residue chain is Ribosomal RNA large subunit methyltransferase H (137 aa).

S-adenosyl-L-methionine contacts are provided by residues L56, G85, and 104 to 109 (LSPLTF).

It belongs to the RNA methyltransferase RlmH family. Homodimer.

The protein localises to the cytoplasm. It carries out the reaction pseudouridine(1915) in 23S rRNA + S-adenosyl-L-methionine = N(3)-methylpseudouridine(1915) in 23S rRNA + S-adenosyl-L-homocysteine + H(+). In terms of biological role, specifically methylates the pseudouridine at position 1915 (m3Psi1915) in 23S rRNA. This chain is Ribosomal RNA large subunit methyltransferase H, found in Prochlorococcus marinus subsp. pastoris (strain CCMP1986 / NIES-2087 / MED4).